A 150-amino-acid polypeptide reads, in one-letter code: Large ribosomal subunit protein bL9 (150 aa).

Belongs to the bacterial ribosomal protein bL9 family.

Functionally, binds to the 23S rRNA. This is Large ribosomal subunit protein bL9 from Staphylococcus aureus (strain NCTC 8325 / PS 47).